A 360-amino-acid polypeptide reads, in one-letter code: Peptide chain release factor 1 (360 aa).

Glutamine 234 is subject to N5-methylglutamine. The tract at residues 285 to 305 is disordered; that stretch reads RAQGIAEDRKSQVGTGDRSER.

It belongs to the prokaryotic/mitochondrial release factor family. Methylated by PrmC. Methylation increases the termination efficiency of RF1.

The protein localises to the cytoplasm. Peptide chain release factor 1 directs the termination of translation in response to the peptide chain termination codons UAG and UAA. This is Peptide chain release factor 1 from Clostridium beijerinckii (strain ATCC 51743 / NCIMB 8052) (Clostridium acetobutylicum).